Consider the following 379-residue polypeptide: Cytochrome b (379 aa).

Transmembrane regions (helical) follow at residues 33 to 53 (FGSL…FLAM), 77 to 98 (WMIR…FMHV), 113 to 133 (WNIG…GYVL), and 178 to 198 (FFAF…VHLL). His-83 and His-97 together coordinate heme b. Residues His-182 and His-196 each contribute to the heme b site. His-201 contributes to the a ubiquinone binding site. Helical transmembrane passes span 226–246 (IKDI…VLFS), 288–308 (LGGV…PMLH), 320–340 (LSQC…WIGG), and 347–367 (FITI…XLMP).

The protein belongs to the cytochrome b family. In terms of assembly, the cytochrome bc1 complex contains 11 subunits: 3 respiratory subunits (MT-CYB, CYC1 and UQCRFS1), 2 core proteins (UQCRC1 and UQCRC2) and 6 low-molecular weight proteins (UQCRH/QCR6, UQCRB/QCR7, UQCRQ/QCR8, UQCR10/QCR9, UQCR11/QCR10 and a cleavage product of UQCRFS1). This cytochrome bc1 complex then forms a dimer. Heme b serves as cofactor.

It is found in the mitochondrion inner membrane. Functionally, component of the ubiquinol-cytochrome c reductase complex (complex III or cytochrome b-c1 complex) that is part of the mitochondrial respiratory chain. The b-c1 complex mediates electron transfer from ubiquinol to cytochrome c. Contributes to the generation of a proton gradient across the mitochondrial membrane that is then used for ATP synthesis. This chain is Cytochrome b (MT-CYB), found in Chrotogale owstoni (Owston's palm civet).